Here is a 92-residue protein sequence, read N- to C-terminus: MSDAAAPAQAPAPPTHAPLTPHKHCNTRDRLFGQDPPAVASPKRVTPTFKSQIFDDVPASPSRTPKRTVQVVSRNPVTGEIKPSPSQQQVAA.

Residues Met-1–Ala-92 form a disordered region.

This is an uncharacterized protein from Caenorhabditis elegans.